Here is a 262-residue protein sequence, read N- to C-terminus: Lectin (262 aa).

Residues 1–21 (MASSVLLVLSLFLVLLLTQAS) form the signal peptide. Residues Asn53, Asn82, Asn100, Asn129, and Asn205 are each glycosylated (N-linked (GlcNAc...) asparagine).

Belongs to the leguminous lectin family.

In terms of biological role, this metalloglycoprotein, containing Ca(2+), Mn(2+), binds glycoconjugates containing terminal non-reducing alpha-D-GalNAc residues. The polypeptide is Lectin (Phaseolus lunatus (Lima bean)).